The chain runs to 245 residues: 6-carboxyhexanoate--CoA ligase (245 aa).

Belongs to the BioW family. As to quaternary structure, homodimer. The cofactor is Mg(2+).

It catalyses the reaction heptanedioate + ATP + CoA = 6-carboxyhexanoyl-CoA + AMP + diphosphate. It functions in the pathway metabolic intermediate metabolism; pimeloyl-CoA biosynthesis; pimeloyl-CoA from pimelate: step 1/1. In terms of biological role, catalyzes the transformation of pimelate into pimeloyl-CoA with concomitant hydrolysis of ATP to AMP. This chain is 6-carboxyhexanoate--CoA ligase, found in Thermodesulfovibrio yellowstonii (strain ATCC 51303 / DSM 11347 / YP87).